A 233-amino-acid polypeptide reads, in one-letter code: NAD(P)H-hydrate epimerase (233 aa).

Residues A10–L217 form the YjeF N-terminal domain. Residue N60–D64 coordinates (6S)-NADPHX. K(+) is bound by residues N61 and D125. (6S)-NADPHX contacts are provided by residues G129–P135 and D158. Residue S161 coordinates K(+).

The protein belongs to the NnrE/AIBP family. The cofactor is K(+).

The enzyme catalyses (6R)-NADHX = (6S)-NADHX. It catalyses the reaction (6R)-NADPHX = (6S)-NADPHX. In terms of biological role, catalyzes the epimerization of the S- and R-forms of NAD(P)HX, a damaged form of NAD(P)H that is a result of enzymatic or heat-dependent hydration. This is a prerequisite for the S-specific NAD(P)H-hydrate dehydratase to allow the repair of both epimers of NAD(P)HX. The protein is NAD(P)H-hydrate epimerase of Drosophila grimshawi (Hawaiian fruit fly).